Reading from the N-terminus, the 473-residue chain is ATP synthase subunit beta (473 aa).

153–160 serves as a coordination point for ATP; the sequence is GGAGVGKT.

Belongs to the ATPase alpha/beta chains family. As to quaternary structure, F-type ATPases have 2 components, CF(1) - the catalytic core - and CF(0) - the membrane proton channel. CF(1) has five subunits: alpha(3), beta(3), gamma(1), delta(1), epsilon(1). CF(0) has three main subunits: a(1), b(2) and c(9-12). The alpha and beta chains form an alternating ring which encloses part of the gamma chain. CF(1) is attached to CF(0) by a central stalk formed by the gamma and epsilon chains, while a peripheral stalk is formed by the delta and b chains.

It is found in the cell inner membrane. The enzyme catalyses ATP + H2O + 4 H(+)(in) = ADP + phosphate + 5 H(+)(out). Its function is as follows. Produces ATP from ADP in the presence of a proton gradient across the membrane. The catalytic sites are hosted primarily by the beta subunits. This Rickettsia bellii (strain RML369-C) protein is ATP synthase subunit beta.